A 469-amino-acid chain; its full sequence is GTPase Der (469 aa).

2 consecutive EngA-type G domains span residues 3 to 166 (PVIA…PEDE) and 177 to 350 (LRLA…ESAN). GTP-binding positions include 9-16 (GRPNVGKS), 56-60 (DTGGI), 118-121 (NKVD), 183-190 (GRPNVGKS), 230-234 (DTAGV), and 295-298 (NKWD). The KH-like domain occupies 351–435 (LKVSPAKLTQ…PVKIEFKTSE (85 aa)).

Belongs to the TRAFAC class TrmE-Era-EngA-EngB-Septin-like GTPase superfamily. EngA (Der) GTPase family. In terms of assembly, associates with the 50S ribosomal subunit.

GTPase that plays an essential role in the late steps of ribosome biogenesis. The chain is GTPase Der from Acinetobacter baumannii (strain ACICU).